A 283-amino-acid chain; its full sequence is Pantothenate synthetase (283 aa).

30–37 (MGNLHAGH) serves as a coordination point for ATP. The Proton donor role is filled by His37. Residue Gln61 coordinates (R)-pantoate. Beta-alanine is bound at residue Gln61. 149 to 152 (GRKD) provides a ligand contact to ATP. Gln155 contacts (R)-pantoate. Residue 186-189 (LSSR) coordinates ATP.

It belongs to the pantothenate synthetase family. In terms of assembly, homodimer.

It is found in the cytoplasm. It catalyses the reaction (R)-pantoate + beta-alanine + ATP = (R)-pantothenate + AMP + diphosphate + H(+). The protein operates within cofactor biosynthesis; (R)-pantothenate biosynthesis; (R)-pantothenate from (R)-pantoate and beta-alanine: step 1/1. Catalyzes the condensation of pantoate with beta-alanine in an ATP-dependent reaction via a pantoyl-adenylate intermediate. The chain is Pantothenate synthetase from Chromohalobacter salexigens (strain ATCC BAA-138 / DSM 3043 / CIP 106854 / NCIMB 13768 / 1H11).